We begin with the raw amino-acid sequence, 1548 residues long: Dual oxidase 2 (1548 aa).

An N-terminal signal peptide occupies residues M1–N25. At Q26 to T601 the chain is on the extracellular side. The peroxidase-like; mediates peroxidase activity stretch occupies residues S30–P596. Residues N100, N348, N382, N455, and N537 are each glycosylated (N-linked (GlcNAc...) asparagine). A disulfide bridge links C124 with C1162. Residues I602–F622 traverse the membrane as a helical segment. Over R623 to H1041 the chain is Cytoplasmic. EF-hand domains lie at P819–G854, S855–I890, and Q899–E934. Positions 832, 834, 836, 838, 843, 868, 870, 872, and 879 each coordinate Ca(2+). The tract at residues I960 to T1245 is interaction with TXNDC11. Residues P971–G991 are disordered. Residues I1042–Y1062 form a helical membrane-spanning segment. The Extracellular segment spans residues Y1063–T1076. Residues L1077 to I1097 form a helical membrane-spanning segment. Residues R1084 to S1266 form the Ferric oxidoreductase domain. Residues L1098–R1128 lie on the Cytoplasmic side of the membrane. The chain crosses the membrane as a helical span at residues W1129–I1151. Residues F1152–Q1185 are Extracellular-facing. Residues T1186–A1206 form a helical membrane-spanning segment. At S1207–H1223 the chain is on the cytoplasmic side. The next 2 membrane-spanning stretches (helical) occupy residues L1224 to P1244 and T1245 to L1265. Residues S1266 to F1548 are Cytoplasmic-facing. The 107-residue stretch at R1267–E1373 folds into the FAD-binding FR-type domain.

This sequence in the N-terminal section; belongs to the peroxidase family. Heterodimer with DUOXA2; disulfide-linked. Interacts with TXNDC11, TPO and CYBA. N-glycosylated. Expressed in colon, small intestine, duodenum and tracheal surface epithelial cells (at protein level). Expressed in thyrocytes. Also detected in kidney, liver, lung, pancreas, prostate, salivary glands, rectum and testis.

Its subcellular location is the apical cell membrane. It is found in the cell junction. The enzyme catalyses NADH + O2 + H(+) = H2O2 + NAD(+). It carries out the reaction NADPH + O2 + H(+) = H2O2 + NADP(+). It participates in hormone biosynthesis; thyroid hormone biosynthesis. Peroxidase activity is inhibited by aminobenzohydrazide. The NADPH oxidase activity is calcium-dependent. Functionally, generates hydrogen peroxide which is required for the activity of thyroid peroxidase/TPO and lactoperoxidase/LPO. Plays a role in thyroid hormones synthesis and lactoperoxidase-mediated antimicrobial defense at the surface of mucosa. May have its own peroxidase activity through its N-terminal peroxidase-like domain. In Homo sapiens (Human), this protein is Dual oxidase 2 (DUOX2).